Here is a 276-residue protein sequence, read N- to C-terminus: 2-dehydro-3-deoxyphosphooctonate aldolase (276 aa).

This sequence belongs to the KdsA family.

The protein resides in the cytoplasm. It carries out the reaction D-arabinose 5-phosphate + phosphoenolpyruvate + H2O = 3-deoxy-alpha-D-manno-2-octulosonate-8-phosphate + phosphate. The protein operates within carbohydrate biosynthesis; 3-deoxy-D-manno-octulosonate biosynthesis; 3-deoxy-D-manno-octulosonate from D-ribulose 5-phosphate: step 2/3. Its pathway is bacterial outer membrane biogenesis; lipopolysaccharide biosynthesis. This chain is 2-dehydro-3-deoxyphosphooctonate aldolase, found in Xanthomonas euvesicatoria pv. vesicatoria (strain 85-10) (Xanthomonas campestris pv. vesicatoria).